An 832-amino-acid chain; its full sequence is Subtilisin-like protease SBT2.4 (832 aa).

Positions 1-27 (METNPRKLRSYSYICLIVCIFVLVVCA) are cleaved as a signal peptide. The Inhibitor I9 domain maps to 74-138 (EAKKIEEIHD…VEEDKGVKLM (65 aa)). Positions 150–690 (QQVWQKISNE…AGHVNPARAL (541 aa)) constitute a Peptidase S8 domain. Aspartate 174 serves as the catalytic Charge relay system. 2 N-linked (GlcNAc...) asparagine glycosylation sites follow: asparagine 196 and asparagine 238. Histidine 252 functions as the Charge relay system in the catalytic mechanism. In terms of domain architecture, PA spans 425–524 (TNGSVLQPLT…SAAQIILRYY (100 aa)). N-linked (GlcNAc...) asparagine glycosylation occurs at asparagine 426. Serine 618 functions as the Charge relay system in the catalytic mechanism. N-linked (GlcNAc...) asparagine glycosylation is found at asparagine 761, asparagine 774, and asparagine 800.

This sequence belongs to the peptidase S8 family.

The protein resides in the secreted. Serine protease required for epidermal surface formation in embryos and juvenile plants. Involved in embryonic cuticle formation downstream of BHLH95/ZOU. The polypeptide is Subtilisin-like protease SBT2.4 (Arabidopsis thaliana (Mouse-ear cress)).